A 154-amino-acid chain; its full sequence is 6,7-dimethyl-8-ribityllumazine synthase (154 aa).

5-amino-6-(D-ribitylamino)uracil is bound by residues Phe22, Ser56–Glu58, and Ala80–Ile82. Ser85–Thr86 lines the (2S)-2-hydroxy-3-oxobutyl phosphate pocket. The active-site Proton donor is His88. Tyr113 lines the 5-amino-6-(D-ribitylamino)uracil pocket. A (2S)-2-hydroxy-3-oxobutyl phosphate-binding site is contributed by Arg127.

The protein belongs to the DMRL synthase family. As to quaternary structure, forms an icosahedral capsid composed of 60 subunits, arranged as a dodecamer of pentamers.

It catalyses the reaction (2S)-2-hydroxy-3-oxobutyl phosphate + 5-amino-6-(D-ribitylamino)uracil = 6,7-dimethyl-8-(1-D-ribityl)lumazine + phosphate + 2 H2O + H(+). It participates in cofactor biosynthesis; riboflavin biosynthesis; riboflavin from 2-hydroxy-3-oxobutyl phosphate and 5-amino-6-(D-ribitylamino)uracil: step 1/2. Functionally, catalyzes the formation of 6,7-dimethyl-8-ribityllumazine by condensation of 5-amino-6-(D-ribitylamino)uracil with 3,4-dihydroxy-2-butanone 4-phosphate. This is the penultimate step in the biosynthesis of riboflavin. The protein is 6,7-dimethyl-8-ribityllumazine synthase of Sulfurihydrogenibium sp. (strain YO3AOP1).